The chain runs to 346 residues: ATP-dependent (S)-NAD(P)H-hydrate dehydratase 2 (346 aa).

The interval 1–20 is disordered; sequence MMVHSPLATGPHPTTHLEPT. The YjeF C-terminal domain maps to 28–339; it reads LLRKAFQMIP…GYIGEAFEQV (312 aa). Residues Gly135 and 188–194 each bind (6S)-NADPHX; that span reads NHVEFQR. Residues 228-232 and 248-257 each bind ATP; these read KGSID and GSPKRCGGQG. Asp258 contacts (6S)-NADPHX.

This sequence belongs to the NnrD/CARKD family. Mg(2+) is required as a cofactor.

The protein localises to the cytoplasm. It carries out the reaction (6S)-NADHX + ATP = ADP + phosphate + NADH + H(+). The enzyme catalyses (6S)-NADPHX + ATP = ADP + phosphate + NADPH + H(+). Its function is as follows. Catalyzes the dehydration of the S-form of NAD(P)HX at the expense of ATP, which is converted to ADP. Together with NAD(P)HX epimerase, which catalyzes the epimerization of the S- and R-forms, the enzyme allows the repair of both epimers of NAD(P)HX, a damaged form of NAD(P)H that is a result of enzymatic or heat-dependent hydration. The chain is ATP-dependent (S)-NAD(P)H-hydrate dehydratase 2 from Puccinia graminis f. sp. tritici (strain CRL 75-36-700-3 / race SCCL) (Black stem rust fungus).